Reading from the N-terminus, the 477-residue chain is Bifunctional protein HldE (477 aa).

The interval 1-320 (MKDSLPAFEK…SLSDTHHSET (320 aa)) is ribokinase. 195-198 (NLHE) serves as a coordination point for ATP. Residue D264 is part of the active site. Positions 346 to 477 (MTNGCFDILH…KIIENIMANQ (132 aa)) are cytidylyltransferase.

It in the N-terminal section; belongs to the carbohydrate kinase PfkB family. This sequence in the C-terminal section; belongs to the cytidylyltransferase family. As to quaternary structure, homodimer.

The catalysed reaction is D-glycero-beta-D-manno-heptose 7-phosphate + ATP = D-glycero-beta-D-manno-heptose 1,7-bisphosphate + ADP + H(+). The enzyme catalyses D-glycero-beta-D-manno-heptose 1-phosphate + ATP + H(+) = ADP-D-glycero-beta-D-manno-heptose + diphosphate. It participates in nucleotide-sugar biosynthesis; ADP-L-glycero-beta-D-manno-heptose biosynthesis; ADP-L-glycero-beta-D-manno-heptose from D-glycero-beta-D-manno-heptose 7-phosphate: step 1/4. The protein operates within nucleotide-sugar biosynthesis; ADP-L-glycero-beta-D-manno-heptose biosynthesis; ADP-L-glycero-beta-D-manno-heptose from D-glycero-beta-D-manno-heptose 7-phosphate: step 3/4. Functionally, catalyzes the phosphorylation of D-glycero-D-manno-heptose 7-phosphate at the C-1 position to selectively form D-glycero-beta-D-manno-heptose-1,7-bisphosphate. Catalyzes the ADP transfer from ATP to D-glycero-beta-D-manno-heptose 1-phosphate, yielding ADP-D-glycero-beta-D-manno-heptose. The polypeptide is Bifunctional protein HldE (Shewanella piezotolerans (strain WP3 / JCM 13877)).